Consider the following 252-residue polypeptide: ATP synthase subunit a (252 aa).

6 helical membrane-spanning segments follow: residues 29–49 (FTNVSFFIIATVVLSSVFLFI), 87–107 (FFPLVFSLFVFILVANFIGLF), 117–137 (IMITFSLAMLVILTVIGCGFY), 146–166 (LFVPSGVPVMILPLVTVIEVI), 196–216 (FIVSMVGLGFIGVGGSILPLI), and 219–239 (VAITALEFLVAFLQAYVFTVL).

Belongs to the ATPase A chain family. In terms of assembly, F-type ATPases have 2 components, CF(1) - the catalytic core - and CF(0) - the membrane proton channel. CF(1) has five subunits: alpha(3), beta(3), gamma(1), delta(1), epsilon(1). CF(0) has three main subunits: a(1), b(2) and c(9-12). The alpha and beta chains form an alternating ring which encloses part of the gamma chain. CF(1) is attached to CF(0) by a central stalk formed by the gamma and epsilon chains, while a peripheral stalk is formed by the delta and b chains.

It is found in the cell inner membrane. Key component of the proton channel; it plays a direct role in the translocation of protons across the membrane. In Bartonella bacilliformis (strain ATCC 35685 / KC583 / Herrer 020/F12,63), this protein is ATP synthase subunit a.